Reading from the N-terminus, the 428-residue chain is Spliceosome RNA helicase DDX39B (428 aa).

The span at M1–E19 shows a compositional bias: acidic residues. The interval M1 to K32 is disordered. Residue A2 is modified to N-acetylalanine. Residue K36 is modified to N6-acetyllysine; alternate. K36 is covalently cross-linked (Glycyl lysine isopeptide (Lys-Gly) (interchain with G-Cter in SUMO2); alternate). Phosphoserine occurs at positions 38 and 41. Positions S45–H73 match the Q motif motif. Residues I76–I249 enclose the Helicase ATP-binding domain. A89 to T96 serves as a coordination point for ATP. A Phosphothreonine modification is found at T172. A DECD box motif is present at residues D196–D199. The region spanning G261–S422 is the Helicase C-terminal domain.

It belongs to the DEAD box helicase family. DECD subfamily. As to quaternary structure, homodimer, and heterodimer with DDX39A. DDX39B interacts with the THO subcomplex to form the THO-DDX39B complex which multimerizes into a 28-subunit tetrameric assembly. Component of the transcription/export (TREX) complex at least composed of ALYREF/THOC4, DDX39B, SARNP/CIP29, CHTOP and the THO subcomplex; in the complex interacts with THOC2. THOC1-THOC2-THOC3-DDX39B subcomplex is sufficient for the interaction with export factor NXF1-NXT1. TREX seems to have a dynamic structure involving ATP-dependent remodeling. Within the TREX complex bridges ALYREF/THOC4 and the THO subcomplex, and, in a ATP-dependent manner, ALYREF/THOC4 and SARNP/CIP29. Component of the spliceosome. Interacts directly with U2AF2. Interacts with RBM8A, RNPS1 and SRRM1, FYTTD1/UIF, THOC1, MX1 and POLDIP3. Interacts with LUZP4. Interacts with SARNP/CIP29 (via the C-terminal domain); the interaction is direct and facilitates RNA binding of DDX39B.

It is found in the nucleus. It localises to the nucleus speckle. The protein localises to the cytoplasm. The catalysed reaction is ATP + H2O = ADP + phosphate + H(+). Involved in nuclear export of spliced and unspliced mRNA. Component of the TREX complex which is thought to couple mRNA transcription, processing and nuclear export, and specifically associates with spliced mRNA and not with unspliced pre-mRNA. The TREX complex is recruited to spliced mRNAs by a transcription-independent mechanism, binds to mRNA upstream of the exon-junction complex (EJC) and is recruited in a splicing- and cap-dependent manner to a region near the 5' end of the mRNA where it functions in mRNA export to the cytoplasm via the TAP/NXF1 pathway. The THOC1-THOC2-THOC3 core complex alone is sufficient to promote ATPase activity of DDX39B; in the complex THOC2 is the only component that directly interacts with DDX39B. Associates with SARNP/CIP29, which facilitates RNA binding of DDX39B and likely plays a role in mRNA export. May undergo several rounds of ATP hydrolysis during assembly of TREX to drive subsequent loading of components such as ALYREF/THOC4 and CHTOP onto mRNA. Also associates with pre-mRNA independent of ALYREF/THOC4. Involved in the nuclear export of intronless mRNA; the ATP-bound form is proposed to recruit export adapter ALYREF/THOC4 to intronless mRNA; its ATPase activity is cooperatively stimulated by RNA and ALYREF/THOC4 and ATP hydrolysis is thought to trigger the dissociation from RNA to allow the association of ALYREF/THOC4 and the NXF1-NXT1 heterodimer. Involved in transcription elongation and genome stability. Functionally, splice factor that is required for the first ATP-dependent step in spliceosome assembly and for the interaction of U2 snRNP with the branchpoint. Has both RNA-stimulated ATP binding/hydrolysis activity and ATP-dependent RNA unwinding activity. Even with the stimulation of RNA, the ATPase activity is weak. Can only hydrolyze ATP but not other NTPs. The RNA stimulation of ATPase activity does not have a strong preference for the sequence and length of the RNA. However, ssRNA stimulates the ATPase activity much more strongly than dsRNA. Can unwind 5' or 3' overhangs or blunt end RNA duplexes in vitro. The ATPase and helicase activities are not influenced by U2AF2; the effect of ALYREF/THOC4 is reported conflictingly. The polypeptide is Spliceosome RNA helicase DDX39B (DDX39B) (Canis lupus familiaris (Dog)).